A 274-amino-acid polypeptide reads, in one-letter code: Receptor-like protein 44 (274 aa).

The N-terminal stretch at 1-24 (MTRSHRLLLLLLLIFQTAQRLTTA) is a signal peptide. Topologically, residues 25 to 223 (DPNDEACLKN…PLQEMMMKSK (199 aa)) are extracellular. N-linked (GlcNAc...) asparagine glycosylation is found at Asn-48, Asn-82, and Asn-95. LRR repeat units follow at residues 96 to 121 (CTNL…QYLV), 123 to 144 (LAVL…LALC), 145 to 168 (AYLN…LGLL), and 169 to 192 (ARLS…LSNR). N-linked (GlcNAc...) asparagine glycosylation occurs at Asn-127. N-linked (GlcNAc...) asparagine glycosylation is found at Asn-191 and Asn-200. The chain crosses the membrane as a helical span at residues 224–244 (GLSVMAIVGIGLGSGIASLMI). Topologically, residues 245–274 (SFTGVCLWLRITEKKIVEEEGKISQSMPDY) are cytoplasmic.

It belongs to the RLP family.

It is found in the cell membrane. The protein is Receptor-like protein 44 of Arabidopsis thaliana (Mouse-ear cress).